Consider the following 399-residue polypeptide: Exodeoxyribonuclease 7 large subunit (399 aa).

The protein belongs to the XseA family. Heterooligomer composed of large and small subunits.

It localises to the cytoplasm. It carries out the reaction Exonucleolytic cleavage in either 5'- to 3'- or 3'- to 5'-direction to yield nucleoside 5'-phosphates.. In terms of biological role, bidirectionally degrades single-stranded DNA into large acid-insoluble oligonucleotides, which are then degraded further into small acid-soluble oligonucleotides. The polypeptide is Exodeoxyribonuclease 7 large subunit (Clostridium beijerinckii (strain ATCC 51743 / NCIMB 8052) (Clostridium acetobutylicum)).